A 115-amino-acid polypeptide reads, in one-letter code: Holo-[acyl-carrier-protein] synthase (115 aa).

Mg(2+) is bound by residues aspartate 8 and glutamate 56.

Belongs to the P-Pant transferase superfamily. AcpS family. Requires Mg(2+) as cofactor.

It is found in the cytoplasm. The catalysed reaction is apo-[ACP] + CoA = holo-[ACP] + adenosine 3',5'-bisphosphate + H(+). In terms of biological role, transfers the 4'-phosphopantetheine moiety from coenzyme A to a Ser of acyl-carrier-protein. The protein is Holo-[acyl-carrier-protein] synthase of Ureaplasma parvum serovar 3 (strain ATCC 27815 / 27 / NCTC 11736).